Consider the following 265-residue polypeptide: O-methyltransferase NEC2 (265 aa).

Belongs to the methyltransferase superfamily.

It carries out the reaction desmethylnectriapyrone + S-adenosyl-L-methionine = nectriapyrone + S-adenosyl-L-homocysteine + H(+). O-methyltransferase; part of the gene cluster that mediates the biosynthesis of nectriapyrone and its analogs phomopyrone A, acropyrone and zaepyrone. The nectriapyrone biosynthetic gene cluster consists of two genes, the highly reducing polyketide synthase NEC1 that produces a demethylated analog of nectriapyrone from one unit of acetyl-CoA and one unit of malonyl-CoA; and the O-methyltransferase NEC2 that further methylates the NEC1 product to yield nectriapyrone. Nectriapyrone is further hydrolyzed to nectriapyrone D, also known as gulypyrone B, by an unidentified hydrolase localized outside the nectriapyrone cluster. This Pyricularia oryzae (strain 70-15 / ATCC MYA-4617 / FGSC 8958) (Rice blast fungus) protein is O-methyltransferase NEC2.